The sequence spans 328 residues: Tetraacyldisaccharide 4'-kinase (328 aa).

Residue 55–62 (TAGGNGKT) coordinates ATP.

It belongs to the LpxK family.

It catalyses the reaction a lipid A disaccharide + ATP = a lipid IVA + ADP + H(+). It participates in glycolipid biosynthesis; lipid IV(A) biosynthesis; lipid IV(A) from (3R)-3-hydroxytetradecanoyl-[acyl-carrier-protein] and UDP-N-acetyl-alpha-D-glucosamine: step 6/6. Its function is as follows. Transfers the gamma-phosphate of ATP to the 4'-position of a tetraacyldisaccharide 1-phosphate intermediate (termed DS-1-P) to form tetraacyldisaccharide 1,4'-bis-phosphate (lipid IVA). In Escherichia coli (strain K12 / MC4100 / BW2952), this protein is Tetraacyldisaccharide 4'-kinase.